Here is a 322-residue protein sequence, read N- to C-terminus: Peroxisomal adenine nucleotide carrier 1 (322 aa).

Solcar repeat units follow at residues 5–94 (LESV…FKRV), 104–184 (IGTK…LKQH), and 202–298 (LSAF…ITAT). A run of 6 helical transmembrane segments spans residues 8–28 (VSEATSGAIGSLLSTTILYPL), 104–124 (IGTKANLLIAAAAGACTSVLI), 158–178 (FDGLGISLLLTSNPAIQYTVF), 201–221 (VLSAFMAFVLGAVSKSVATVL), 254–274 (IPGVVYAIWRKEGMLGFFKGL), and 286–306 (ALLLMIKEKITATTWILILAI).

The protein belongs to the mitochondrial carrier (TC 2.A.29) family. In terms of tissue distribution, expressed in stamens, pollen grains, seeds, leaves, cotyledons, roots, stems, flowers, hypocotyls and siliques.

Its subcellular location is the peroxisome membrane. Its function is as follows. Peroxisomal adenine nucleotide transporter catalyzing the counterexchange of ATP with AMP. ATP is needed by reactions that generate acyl-CoA for peroxisomal fatty acid beta-oxidation during postgerminative growth. Required for the beta-oxidation reactions involved in auxin biosynthesis and for the conversion of seed-reserved triacylglycerols into sucrose that is necessary for growth before the onset of photosynthesis. This Arabidopsis thaliana (Mouse-ear cress) protein is Peroxisomal adenine nucleotide carrier 1 (PNC1).